Reading from the N-terminus, the 337-residue chain is Glyceraldehyde-3-phosphate dehydrogenase (337 aa).

NAD(+) is bound by residues arginine 12–isoleucine 13, aspartate 34, and arginine 79. D-glyceraldehyde 3-phosphate is bound by residues serine 150 to threonine 152, threonine 181, threonine 210 to glycine 211, and arginine 233. Cysteine 151 (nucleophile) is an active-site residue. Asparagine 315 serves as a coordination point for NAD(+).

It belongs to the glyceraldehyde-3-phosphate dehydrogenase family. In terms of assembly, homotetramer.

It localises to the cytoplasm. It carries out the reaction D-glyceraldehyde 3-phosphate + phosphate + NAD(+) = (2R)-3-phospho-glyceroyl phosphate + NADH + H(+). Its pathway is carbohydrate degradation; glycolysis; pyruvate from D-glyceraldehyde 3-phosphate: step 1/5. The polypeptide is Glyceraldehyde-3-phosphate dehydrogenase (Cryphonectria parasitica (Chestnut blight fungus)).